The chain runs to 183 residues: Large ribosomal subunit protein uL18 (183 aa).

The protein belongs to the universal ribosomal protein uL18 family. As to quaternary structure, part of the 50S ribosomal subunit. Contacts the 5S and 23S rRNAs.

Its function is as follows. This is one of the proteins that bind and probably mediate the attachment of the 5S RNA into the large ribosomal subunit, where it forms part of the central protuberance. This chain is Large ribosomal subunit protein uL18, found in Halobacterium salinarum (strain ATCC 29341 / DSM 671 / R1).